Consider the following 198-residue polypeptide: Recombination protein RecR (198 aa).

A C4-type zinc finger spans residues 57-72 (CPVCFNITDAERCDVC). The 94-residue stretch at 80 to 173 (NLICVVEEPG…VVSRIAYGLP (94 aa)) folds into the Toprim domain.

This sequence belongs to the RecR family.

Its function is as follows. May play a role in DNA repair. It seems to be involved in an RecBC-independent recombinational process of DNA repair. It may act with RecF and RecO. In Deinococcus deserti (strain DSM 17065 / CIP 109153 / LMG 22923 / VCD115), this protein is Recombination protein RecR.